A 216-amino-acid chain; its full sequence is Cytidylate kinase (216 aa).

7–15 contacts ATP; it reads GPSGTGKST.

The protein belongs to the cytidylate kinase family. Type 1 subfamily.

The protein resides in the cytoplasm. It catalyses the reaction CMP + ATP = CDP + ADP. The enzyme catalyses dCMP + ATP = dCDP + ADP. In Chlamydia trachomatis serovar L2 (strain ATCC VR-902B / DSM 19102 / 434/Bu), this protein is Cytidylate kinase.